Here is a 568-residue protein sequence, read N- to C-terminus: Urease subunit alpha (568 aa).

Positions 130-568 (GGIDTHIHFI…LPMAQRYFLF (439 aa)) constitute a Urease domain. Positions 135, 137, and 218 each coordinate Ni(2+). An N6-carboxylysine modification is found at Lys-218. His-220 lines the substrate pocket. 2 residues coordinate Ni(2+): His-247 and His-273. His-321 acts as the Proton donor in catalysis. Residue Asp-361 coordinates Ni(2+).

The protein belongs to the metallo-dependent hydrolases superfamily. Urease alpha subunit family. As to quaternary structure, heterotrimer of UreA (gamma), UreB (beta) and UreC (alpha) subunits. Three heterotrimers associate to form the active enzyme. Requires Ni cation as cofactor. In terms of processing, carboxylation allows a single lysine to coordinate two nickel ions.

The protein localises to the cytoplasm. The catalysed reaction is urea + 2 H2O + H(+) = hydrogencarbonate + 2 NH4(+). Its pathway is nitrogen metabolism; urea degradation; CO(2) and NH(3) from urea (urease route): step 1/1. The polypeptide is Urease subunit alpha (Burkholderia vietnamiensis (strain G4 / LMG 22486) (Burkholderia cepacia (strain R1808))).